The primary structure comprises 150 residues: SsrA-binding protein (150 aa).

The tract at residues 129–150 is disordered; it reads ETEKQRDWQREKSRIMKGGSKE.

It belongs to the SmpB family.

It is found in the cytoplasm. Its function is as follows. Required for rescue of stalled ribosomes mediated by trans-translation. Binds to transfer-messenger RNA (tmRNA), required for stable association of tmRNA with ribosomes. tmRNA and SmpB together mimic tRNA shape, replacing the anticodon stem-loop with SmpB. tmRNA is encoded by the ssrA gene; the 2 termini fold to resemble tRNA(Ala) and it encodes a 'tag peptide', a short internal open reading frame. During trans-translation Ala-aminoacylated tmRNA acts like a tRNA, entering the A-site of stalled ribosomes, displacing the stalled mRNA. The ribosome then switches to translate the ORF on the tmRNA; the nascent peptide is terminated with the 'tag peptide' encoded by the tmRNA and targeted for degradation. The ribosome is freed to recommence translation, which seems to be the essential function of trans-translation. In Cupriavidus pinatubonensis (strain JMP 134 / LMG 1197) (Cupriavidus necator (strain JMP 134)), this protein is SsrA-binding protein.